The sequence spans 1047 residues: MVENSTQKAPHAGNDDNSSTKPYSEAFFLGFNNPTPGLEAEHSSTSPAPENSETHNRKRNRILFVCQACRKSKTKCDREKPECGRCVKHGLKCVYDVSKQPAPRIPSKDAIISRLEKDMFYWKDKAMKLLTEREVNESGKRSASPINTNNASGDSPDTKKQHKMEPIYEQSGNGDINNGTRNDIEINLYRSHPTMIMSKVMKREVKPLSENYIIIQDCFLKILVTSVFLDTSKNTMIPALTANANITRAQPSVANNLLKLKEMLIRQCQTEDEKNRVNEFTDRILQNTNSNRNLKIGMLLSMLYNSVGYQYLEDHCPQGGEYSDLLRNLINECEAILPSYEIIERYKNHFYEYVYPSLPFIELEIFEESLSQTIFPDPNNPSKVQIRMGSTHLRAKVENLSLLLVILKLSYMSIRFLDHSTADSSFYLSKEIIDKYPIPNDFILLSQRCLASENWCACANENIISCLLYIWSFFAFSPEEGDFFLEHPTDVISSLIMMLSTSIGLHRDPSDFPQLISPSTSDKRTLNHRRILWLSIVTVCSFEASLKGRHSVSPISLMALFLNIKDPDSLTVYMNRVRGDLSDINNHKLLRIHKFTFKRAQLALLLSDLDNLTMTYYGSFHLHSIEFIREKIEIFVEENFPIVPLKSVAQDKSDLDDMNVISEMNILSSENSSSFHNRIMNKLLMLRTSMAVFLHFETLITKDKSIFPFYKKYFMVSCMDALSLINYFNKFFNGEYRHAISSLTSFNVTKFIQLALSSTIFSLLGIILRIGLAIHMLSSEVQKLSGTTDPRIKELNTKVEKFSTLQRDLESALEGIYCSASEHLRFTYFPVFKMLALFDVIVQRMRKGELWHGIFTMIQMEQMHSRIIKTLSITLGVKLDKKDRLLEELMACNHVANFSVEDIDELNRNIKKEIQISSGLKPPVNTIDLTNGEPFGNAVPTFTKTWSSSLDNLEKLSSAAAVGQSLDYNSGLRQGPLAGGGSKEQTPIAGMNNLNNSINATPIVDNSSGSQLPNGFDRGQANNTPFPGYFGGLDLFDYDFLFGNDFA.

Residues 1–56 (MVENSTQKAPHAGNDDNSSTKPYSEAFFLGFNNPTPGLEAEHSSTSPAPENSETHN) form a disordered region. The segment at residues 66–93 (CQACRKSKTKCDREKPECGRCVKHGLKC) is a DNA-binding region (zn(2)-C6 fungal-type). A disordered region spans residues 133–163 (REVNESGKRSASPINTNNASGDSPDTKKQHK). Polar residues predominate over residues 144–155 (SPINTNNASGDS). Ser-155 carries the phosphoserine modification. The 9aaTAD motif lies at 1034-1042 (DLFDYDFLF).

Heterodimer of PIP2 and OAF1.

The protein localises to the nucleus. In terms of biological role, the PIP2-OAF1 heterodimer acts as a transcriptional activator to induce the transcription of genes encoding proteins involved in fatty acid beta-oxidation, a response called oleic acid induction, when cells grow on fatty acids as sole carbon source. Recognizes and binds to the oleate response element (ORE) (or peroxisome box), two inverted CGG triplets spaced by 14 to 18 intervening nucleotides, in the promoter region of a number of genes (such as CTA1, FOX1 to FOX3, FAA2, PAS8, PAS10, etc.) for peroxisomal proteins. OAF1 acts as the sensor for oleate and inhibits PIP2 activity under non-inducing conditions. Activity is repressed by glucose. The polypeptide is Oleate-activated transcription factor 1 (OAF1) (Saccharomyces cerevisiae (strain ATCC 204508 / S288c) (Baker's yeast)).